A 292-amino-acid polypeptide reads, in one-letter code: MQGQIIKALAGFYYVESDGQVYQTRARGNFRKKGHTPYVGDWVDFSAEENSEGYILKIHERKNSLVRPPIVNIDQAVVIMSVKEPDFNSNLLDRFLVLLEHKGIHPIVYISKMDLLEDRGELDFYQQTYGDIGYDFVTSKEELLSLLTGKVTVFMGQTGVGKSTLLNKIAPDLNLETGEISDSLGRGRHTTRAVSFYNLNGGKIADTPGFSSLDYEVSRAEDLNQAFPEIATVSRDCKFRTCTHTHEPSCAVKPAVEEGVIATFRFDNYLQFLSEIENRRETYKKVSKKIPK.

The region spanning 62 to 213 (KNSLVRPPIV…IADTPGFSSL (152 aa)) is the CP-type G domain. Residues 111-114 (SKMD) and 156-164 (GQTGVGKST) contribute to the GTP site. Zn(2+) is bound by residues Cys237, Cys242, His244, and Cys250.

Belongs to the TRAFAC class YlqF/YawG GTPase family. RsgA subfamily. Monomer. Associates with 30S ribosomal subunit, binds 16S rRNA. It depends on Zn(2+) as a cofactor.

It is found in the cytoplasm. Functionally, one of several proteins that assist in the late maturation steps of the functional core of the 30S ribosomal subunit. Helps release RbfA from mature subunits. May play a role in the assembly of ribosomal proteins into the subunit. Circularly permuted GTPase that catalyzes slow GTP hydrolysis, GTPase activity is stimulated by the 30S ribosomal subunit. In Streptococcus pneumoniae serotype 4 (strain ATCC BAA-334 / TIGR4), this protein is Small ribosomal subunit biogenesis GTPase RsgA.